The chain runs to 162 residues: Peptidyl-prolyl cis-trans isomerase-like 1 (162 aa).

In terms of domain architecture, PPIase cyclophilin-type spans 1 to 155; that stretch reads MATDVAFDTS…DGVKILRARI (155 aa).

Belongs to the cyclophilin-type PPIase family. PPIL1 subfamily.

The enzyme catalyses [protein]-peptidylproline (omega=180) = [protein]-peptidylproline (omega=0). Functionally, PPIases accelerate the folding of proteins. It catalyzes the cis-trans isomerization of proline imidic peptide bonds in oligopeptides. The protein is Peptidyl-prolyl cis-trans isomerase-like 1 (cypC) of Aspergillus niger.